We begin with the raw amino-acid sequence, 294 residues long: MSAEIEEATNAVNNLSINDSEQQPRAPTHKTVIDPEDTIFIGNVAHECTEDDLKQLFVEEFGDEVSVEIPIKEHTDGHIPASKHALVKFPTKIDFDNIKENYDTKVVKDREIHIKRARTPGQMQRGGFRGRGGFRGRGGFRGGFRGGYRGGFRGRGNFRGRGGARGGFNGQKREKIPLDQMERSKDTLYINNVPFKATKEEVAEFFGTDADSISLPMRKMRDQHTGRIFTSDSANRGMAFVTFSGENVDIEAKAEEFKGKVFGDRELTVDVAVIRPENDEEEIEQETGSEEKQE.

The segment at 1 to 30 is disordered; sequence MSAEIEEATNAVNNLSINDSEQQPRAPTHK. Ser-2 carries the N-acetylserine modification. 2 positions are modified to phosphoserine: Ser-2 and Ser-16. Positions 10-25 are enriched in polar residues; sequence NAVNNLSINDSEQQPR. An RRM 1 domain is found at 37–119; the sequence is DTIFIGNVAH…REIHIKRART (83 aa). Phosphothreonine is present on Thr-49. Ser-66 carries the phosphoserine modification. A phosphothreonine mark is found at Thr-91 and Thr-119. Omega-N-methylarginine is present on Arg-125. An RNA-binding RGG-box region spans residues 131 to 151; that stretch reads RGGFRGRGGFRGGFRGGYRGG. Dimethylated arginine is present on residues Arg-135, Arg-137, and Arg-141. A Dimethylated arginine; alternate modification is found at Arg-145. The residue at position 145 (Arg-145) is an Omega-N-methylarginine; alternate. At Arg-149 the chain carries Omega-N-methylarginine. Residues 151-169 are compositionally biased toward gly residues; that stretch reads GFRGRGNFRGRGGARGGFN. A disordered region spans residues 151–171; sequence GFRGRGNFRGRGGARGGFNGQ. Residues Arg-153, Arg-155, and Arg-159 each carry the dimethylated arginine modification. Dimethylated arginine; alternate is present on residues Arg-161 and Arg-165. Omega-N-methylarginine; alternate is present on residues Arg-161 and Arg-165. Positions 186–274 constitute an RRM 2 domain; the sequence is DTLYINNVPF…RELTVDVAVI (89 aa). Thr-242 carries the phosphothreonine modification. Ser-244 bears the Phosphoserine mark. Residues 275–294 are disordered; the sequence is RPENDEEEIEQETGSEEKQE. Acidic residues predominate over residues 278–288; the sequence is NDEEEIEQETG. Phosphothreonine is present on Thr-287. Residue Ser-289 is modified to Phosphoserine.

Belongs to the RRM GAR family. In terms of assembly, associated with snR10 and snR11 small nuclear RNAs.

Its subcellular location is the cytoplasm. It is found in the nucleus. It localises to the nucleolus. The protein localises to the P-body. The protein resides in the stress granule. Functionally, functions in the transition of mRNAs from translation to an mRNP complex destined for decapping. High-copy-number suppressor of decapping defects. Overexpression suppresses decapping defects in both DCP1-2 and DCP2-7 mutations. Acts to promote translational repression of mRNA in conjunction with DHH1 and subsequent mRNA localization to P bodies. Promotes translational repression of mRNA during glucose deprivation. This chain is Single-stranded nucleic acid-binding protein (SBP1), found in Saccharomyces cerevisiae (strain ATCC 204508 / S288c) (Baker's yeast).